We begin with the raw amino-acid sequence, 296 residues long: Elongation factor Ts (296 aa).

The tract at residues 81 to 84 is involved in Mg(2+) ion dislocation from EF-Tu; sequence TDFV.

The protein belongs to the EF-Ts family.

The protein localises to the cytoplasm. In terms of biological role, associates with the EF-Tu.GDP complex and induces the exchange of GDP to GTP. It remains bound to the aminoacyl-tRNA.EF-Tu.GTP complex up to the GTP hydrolysis stage on the ribosome. The sequence is that of Elongation factor Ts from Ruthia magnifica subsp. Calyptogena magnifica.